The sequence spans 908 residues: Adhesion G-protein coupled receptor F1 (908 aa).

An N-terminal signal peptide occupies residues 1-20 (MRIGLLWLVPLFTLTEGTDG). Residues 21–588 (FLQQKNDGRR…VVPVVKWITY (568 aa)) lie on the Extracellular side of the membrane. 12 N-linked (GlcNAc...) asparagine glycosylation sites follow: Asn-133, Asn-167, Asn-328, Asn-353, Asn-367, Asn-388, Asn-422, Asn-453, Asn-510, Asn-519, Asn-526, and Asn-551. The region spanning 147 to 255 (ERAKVWGTFE…GSFRVFGKAP (109 aa)) is the SEA domain. The GAIN-B domain occupies 434–577 (PVTQIQSTRG…SMLMSPFVPS (144 aa)). 2 disulfide bridges follow: Cys-532–Cys-559 and Cys-547–Cys-561. The segment at 532 to 577 (CVFWDFSQLQWSNAGCQLVNETLDTVLCRCSHLTSFSMLMSPFVPS) is GPS. Residues 566–574 (SFSMLMSPF) are stachel. Residues 589–609 (IGLSISIASLILCLIIESLFW) form a helical membrane-spanning segment. Residues 610 to 622 (KQTKRSQTSYTRN) are Cytoplasmic-facing. A helical transmembrane segment spans residues 623 to 643 (ICLVNIAVSLLIADVWFIIAA). At 644–658 (TVDPSVSPSGVCVAA) the chain is on the extracellular side. An intrachain disulfide couples Cys-655 to Cys-731. A helical transmembrane segment spans residues 659 to 679 (VFFTHFFYLAVFFWMLVLGIL). The Cytoplasmic portion of the chain corresponds to 680–697 (LAYRIILVFHHMALTTMM). A helical transmembrane segment spans residues 698–718 (AIGFCLGYGCPLLISIITLAV). The Extracellular portion of the chain corresponds to 719-742 (TQPSNSYKRNDVCWLNWSDKSKPL). The N-linked (GlcNAc...) asparagine glycan is linked to Asn-734. Residues 743-763 (LAFVVPALTIVAVNLVVVLLV) traverse the membrane as a helical segment. The Cytoplasmic portion of the chain corresponds to 764 to 789 (LRKLWRPAVGERLNQDDKATAIRMGK). A helical membrane pass occupies residues 790 to 810 (SLLVLTPLLGLTWGFGIGTMA). Residues 811 to 818 (NSHNLAWH) lie on the Extracellular side of the membrane. A helical membrane pass occupies residues 819 to 839 (VLFALLNAFQGFFIFCFGILL). Residues 840–908 (DTKLRQLLSN…ITLTQFLSTE (69 aa)) are Cytoplasmic-facing.

The protein belongs to the G-protein coupled receptor 2 family. Adhesion G-protein coupled receptor (ADGR) subfamily. In terms of assembly, heterodimer of 2 chains generated by proteolytic processing; the large extracellular N-terminal fragment and the membrane-bound C-terminal fragment predominantly remain associated and non-covalently linked. Autoproteolytically processed at the GPS region of the GAIN-B domain; this cleavage modulates receptor activity. In terms of tissue distribution, expressed in liver, kidney and adrenal gland. In kidney strong expression in the renal pelvis and the ureter.

It localises to the cell membrane. Its activity is regulated as follows. Forms a heterodimer of 2 chains generated by proteolytic processing that remain associated through non-covalent interactions mediated by the GAIN-B domain. In the inactivated receptor, the Stachel sequence (also named stalk) is embedded in the GAIN-B domain, where it adopts a beta-strand conformation. On activation, the Stachel moves into the 7 transmembrane region and adopts a twisted hook-shaped configuration that forms contacts within the receptor, leading to coupling of a G-alpha protein, which activates signaling. The cleaved GAIN-B and N-terminal domains can then dissociate from the rest of the receptor. In terms of biological role, adhesion G-protein coupled receptor (aGPCR) for N-docosahexaenoylethanolamine (synaptamide), an omega-3 fatty acid lipid highly enriched in the brain. Ligand binding causes a conformation change that triggers signaling via guanine nucleotide-binding proteins (G proteins) and modulates the activity of downstream effectors, such as adenylate cyclase. ADGRF1 is coupled to G(s) G proteins and mediates activation of adenylate cyclase activity. Also able to couple to G(q), G(i) and G(12)/G(13) G proteins; additional evidence is however required to confirm this result in vivo. Involved in the development of neurons and cognitive function. In liver, involved in fat accumulation. This is Adhesion G-protein coupled receptor F1 from Mus musculus (Mouse).